Here is a 264-residue protein sequence, read N- to C-terminus: MIGRLLRGGFMTAIYAYLYIPIIILIVNSFNSSRFGINWQGFTTKWYSLLMNNDSLLQAAQHSLTMAVFSATFATLIGSLTAVALYRYRFRGKPFVSGMLFVVMMSPDIVMAISLLVLFMLLGIQLGFWSLLFSHITFCLPFVVVTVYSRLKGFDVRMLEAAKDLGASEFTILRKIILPLAMPAVAAGWVLSFTLSMDDVVVSSFVTGPSYEILPLKIYSMVKVGVSPEVNALATILLVLSLVMVIASQLIARDKTKGNTGDVK.

Residues 1 to 7 (MIGRLLR) lie on the Cytoplasmic side of the membrane. A helical transmembrane segment spans residues 8–27 (GGFMTAIYAYLYIPIIILIV). Topologically, residues 28 to 65 (NSFNSSRFGINWQGFTTKWYSLLMNNDSLLQAAQHSLT) are periplasmic. The 189-residue stretch at 60–248 (AQHSLTMAVF…VLSLVMVIAS (189 aa)) folds into the ABC transmembrane type-1 domain. Residues 66–85 (MAVFSATFATLIGSLTAVAL) traverse the membrane as a helical segment. Over 86-100 (YRYRFRGKPFVSGML) the chain is Cytoplasmic. Residues 101-120 (FVVMMSPDIVMAISLLVLFM) form a helical membrane-spanning segment. Over 121-128 (LLGIQLGF) the chain is Periplasmic. The helical transmembrane segment at 129-148 (WSLLFSHITFCLPFVVVTVY) threads the bilayer. The Cytoplasmic portion of the chain corresponds to 149-176 (SRLKGFDVRMLEAAKDLGASEFTILRKI). Residues 177–196 (ILPLAMPAVAAGWVLSFTLS) traverse the membrane as a helical segment. Residues 197–231 (MDDVVVSSFVTGPSYEILPLKIYSMVKVGVSPEVN) lie on the Periplasmic side of the membrane. The chain crosses the membrane as a helical span at residues 232–251 (ALATILLVLSLVMVIASQLI). Over 252–264 (ARDKTKGNTGDVK) the chain is Cytoplasmic.

The protein belongs to the binding-protein-dependent transport system permease family. CysTW subfamily.

It is found in the cell inner membrane. Functionally, required for the activity of the bacterial periplasmic transport system of putrescine and spermidine. The sequence is that of Spermidine/putrescine transport system permease protein PotC (potC) from Escherichia coli O157:H7.